We begin with the raw amino-acid sequence, 2480 residues long: MKVTVDVEADSPFLKALQKAFPAFEVESQQVTPNDHANARAFSHLATKLIEQEVPANITILDVGSAPARRLMSDHSYHCICPMKSAEDPERLANYARKLAKTAGEVLDKNVSGKITDLQDVMATPDLESPTFCLHTDETCRTRAEVAVYQDVXXHAPTSLYHQAMKGVRTVYWIGFDTTPFMFEVVAGAYPTYSTNWADEQVLQARNIGLCATSLSEGHRGKISIMRKKRLRPSDRXMFSVGXTLYIESRRLLKSWHLPSVFHLKGKNSFTCRCDTIVSCEGYVVKKITMSPGTYGKTVGYAVTHHAEGFLMCKVTDTVRGERVSFPVCTYVPATICDQMTGILATDVTPEDAQKLLVGLNQRIVVNGRTQRNTNTMKNYLLPVVAQAFSKWAREAKADMEDEKPLGTRERTLTCCCLWAFKNHKTHTMYKRPDTQTIVKVPSTFDSFVIPSLWSSSLSIGIRQRIKLLLGPKLSRDLPYSGDRNEAREAEKEAEETKEAELTREALPPLVGSNCADDVDQVDVEELTYRAGAGVVETPRNALKVTPQERDQLIGAYLILSPQTVLKSEKLTPIHPLAEQVTIMTHSGRSGRYPVDRYDGRVLVPTGAAIPVSEFQALSESATMVYNEREFINRKLHHIALYGPALNTDEENYEKVRAERAEAEYVFDVDKRTCVKREDASGLVLVGDLINPPFHEFAYEGLKIRPATPFQTTVIGVFGVPGSGKSAIIKSVVTTRDLVASGKKENCQEIVNDVKKQRGLDVTARTVDSILLNGCRRGVENLYVDEAFACHSGTLLALIAMVKPTGKVILCGDPKQCGFFNLMQLKVNFNHDICTQVLHKSISRRCTLPITAIVSTLHYQGKMRTTNLCSAPIQIDTTGTTKPAKGDIVLTCFRXWVKQLQIDYRGHEVMTAAASQGLTRKGVYAVRQKVNENPLYAPSSEHVNVLLTRTENRLVWKTLSGDPWIKVLTNIPKGDFSATLEEWQEEHDNIMNALRERSTAVDPFQNKAKVCWAKCLVQVLETAGIRMTAEEWDTVLAFREDRAYSPEVALNEICTKYYGVDLDSGLFSAQSVSLYYENNHWDNRPGGRMYGFNREVARKFEQRYPFLRGKMDSGLQVNVPERKVQPFNAECNILLLNRRLPHALVTSYQQCRGERVEWLLKKLPGYHLLLVSEYNLALPHKRVFWIAPPHVSGADRIYDLDLGLPLNAGRYDLVFVNIHTEYRTHHYQQCVDHSMKLQMLGGDSLHLLXPGGSLLIRAYGYADRVSEMVVTALARKFSAFRVLRPACVTSNTEVFLLFTNFDNGRRAVTLHQANQRLSSMFACNGLHTAGCAPSYRVRRTDISGHAEEAVVNAANAKGTVGVGVCRAVARKWPDSFKGAATPVGTAKLVQANGMNVIHAVGPNFSTVTEAEGDRELAAAYRAVAGIINASNIKSVAIPLLSTGVFSGGKDRVMQSLNHLFTAMDTTDADVVIYCRDKAWEKKIQEAIDRRTAVELVSEDISLESDLIRVHPDSCLVGRKGYSITDGKLHSYLEGTRFHQTAVDMAEISTLWPKLQDANEQICLYALGESMDSIRTKCPVEDADSSTPPKTVPCLCRYAMTAERVARLRMNNTKAIIVCSSFPLPKYRIEGVQKVKCDRVLIFDQTVPSLVSPRKYIPAAASMHADTVSLDSTVSTGSAWSFPSEATYETMEVVAEVHHSEPPVPPPRRRRAQVTMHHQELLEVSDMHTPIAARVEIPVYDTAVVAERVAIPCTSEYATPIPTPRAVRVVPVPAPRIQRASTYRVSPTPTPRVLRASVCSVTTSAGVEFPWAPEDLEVLTEPVHCEMREPVELPWEPEDVDIQFGDFETPDKIQFGDIDFDQFXLSRAGAYIFSSDTGPGHLQQKSVRQHALPCEMLYAHEEERTYPPALDEAREKLLQAKMQMAPTEANKSRYQSRKVENMKAVIIDRLKDGARTYLAEQSEKIPTYASKYPRPVYSPSVEDSLQSPEVAVAACNAFLEANYPTVASYQITDEYDAYLDMVDGSESCLDRATFCPAKLRCYPKHHAYHQPQVRSAVPSPFQNTLQNVLAAATKRNCNVTQMRELPTLDSAVFNVECFKKFACNGEYWQEFKDDPIRITTENITTYVTRLKGPKAAALFAKTHNLVPLQEVPMDRFVVDMKRDVKVTPGTKHTEERPKVQVIQAAEPLATAYLCGIHRELVRRLKAVLAPNIHTLFDMSAEDFDAIIAAHFQPGDAVLETDIASFDKSQDDSLALTALMLLEDLGVDQELLDLIEEAFGEITSVHLPTGTRFKFGAMMKSGMFLTLFINTLLNIVIACRVLREKLTNSICAAFIGDDNIVHGVRSDPLMAERCASWVNMEVKIIDATMCEKPPYFCGGFILYDNVTGSACRVADPLKRLFKLGKPLPAGDTQDEDRRRALKDETDRWARVGLKSELEIALSSRYEVNGTGNIVRAMATLAKSLKNFKKLRGPIVHLYGGPK.

Residues 27 to 257 form the Alphavirus-like MT domain; it reads ESQQVTPNDH…ESRRLLKSWH (231 aa). Residues 242–261 form a nsP1 membrane-binding region; that stretch reads GXTLYIESRRLLKSWHLPSV. 2 S-palmitoyl cysteine; by host lipidation sites follow: cysteine 415 and cysteine 417. Residues 480–506 are disordered; the sequence is YSGDRNEAREAEKEAEETKEAELTREA. Over residues 483–504 the composition is skewed to basic and acidic residues; the sequence is DRNEAREAEKEAEETKEAELTR. One can recognise a (+)RNA virus helicase ATP-binding domain in the interval 688 to 840; that stretch reads DLINPPFHEF…HDICTQVLHK (153 aa). 719 to 726 contacts a ribonucleoside 5'-triphosphate; the sequence is GVPGSGKS. The 149-residue stretch at 841-989 folds into the (+)RNA virus helicase C-terminal domain; it reads SISRRCTLPI…LEEWQEEHDN (149 aa). The 323-residue stretch at 1002–1324 folds into the Peptidase C9 domain; sequence DPFQNKAKVC…QRLSSMFACN (323 aa). The tract at residues 1003-1022 is nucleolus localization signal; the sequence is PFQNKAKVCWAKCLVQVLET. Cysteine 1011 acts as the For cysteine protease nsP2 activity in catalysis. Positions 1055-1064 match the Nuclear export signal motif; it reads TKYYGVDLDS. Residue histidine 1080 is the For cysteine protease nsP2 activity of the active site. The Nuclear localization signal motif lies at 1179–1183; the sequence is PHKRV. One can recognise a Macro domain in the interval 1332–1491; it reads APSYRVRRTD…KIQEAIDRRT (160 aa). ADP-D-ribose is bound by residues aspartate 1341, asparagine 1355, glycine 1363, glycine 1443, valine 1444, and phenylalanine 1445. Zn(2+)-binding residues include cysteine 1593, cysteine 1595, cysteine 1618, and cysteine 1636. Threonine 1675 carries the post-translational modification Phosphothreonine; by host. Short sequence motifs (FGDF; binding to host G3BP1) lie at residues 1843-1846 and 1854-1857; these read FGDF and FGDI. The region spanning 2234–2349 is the RdRp catalytic domain; the sequence is DAVLETDIAS…HGVRSDPLMA (116 aa).

Interacts with non-structural protein 3. Interacts with RNA-directed RNA polymerase nsP4. Interacts with protease nsP2. interacts with itself. In terms of assembly, interacts with mRNA-capping enzyme nsP1. Interacts with host DDX1. Interacts with host DDX3. Interacts (via C-terminus) with host G3BP1; this interaction inhibits the formation of host stress granules on viral mRNAs and the nsp3-G3BP1 complexes bind viral RNAs and probably orchestrate the assembly of viral replication complexes. Interacts (via C-terminus) with host G3BP2; this interaction inhibits the formation of host stress granules on viral mRNAs and the nsp3-G3BP2 complexes bind viral RNAs and probably orchestrate the assembly of viral replication complexes. As to quaternary structure, interacts with mRNA-capping enzyme nsP1. Interacts with protease nsP2. interacts with itself. Interacts with RNA-directed RNA polymerase nsP4. Interacts with mRNA-capping enzyme nsP1. Interacts with KPNA1/karyopherin-alpha1; this interaction probably allows the active transport of protease nsP2 into the host nucleus. The cofactor is Mg(2+). It depends on Mn(2+) as a cofactor. Post-translationally, specific enzymatic cleavages in vivo yield mature proteins. The processing of the polyprotein is temporally regulated. In early stages (1.7 hpi), P1234 is first cleaved in trans through its nsP2 protease activity, releasing P123' and nsP4, which associate to form the early replication complex. At the same time, P1234 is also cut at the nsP1/nsP2 site early in infection but with lower efficiency. After replication of the viral minus-strand RNAs (4 hpi), the polyproteins are cut at the nsP1/nsP2 and nsP2/nsP3 sites very efficiently, preventing accumulation of P123' and P1234 and allowing the formation of the late replication complex. NsP3'/nsP4 site is not cleaved anymore and P34 is produced rather than nsP4. In terms of processing, specific enzymatic cleavages in vivo yield mature proteins. The processing of the polyprotein is temporally regulated. In early stages (1.7 hpi), P123 is cleaved at the nsP1/nsP2 site with low efficiency. After replication of the viral minus-strand RNAs (4 hpi), the polyproteins are cut at the nsP1/nsP2 and nsP2/nsP3 sites very efficiently, preventing accumulation of P123 and allowing the formation of the late replication complex. Specific enzymatic cleavages in vivo yield mature proteins. The processing of the polyprotein is temporally regulated. In early stages (1.7 hpi), P123' is cleaved at the nsP1/nsP2 site with low efficiency. After replication of the viral minus-strand RNAs (4 hpi), the polyproteins are cut at the nsP1/nsP2 and nsP2/nsP3 sites very efficiently, preventing accumulation of P123' and allowing the formation of the late replication complex. Post-translationally, palmitoylated by host palmitoyltransferases ZDHHC2 and ZDHHC19. In terms of processing, phosphorylated by host on serines and threonines. Ubiquitinated; targets the protein for rapid degradation via the ubiquitin system. Nsp4 is present in extremely low quantities due to low frequency of translation through the amber stop-codon and the degradation by the ubiquitin pathway.

Its subcellular location is the host cytoplasmic vesicle membrane. The protein resides in the host cell membrane. The protein localises to the host cell projection. It is found in the host filopodium. It localises to the host nucleus. Its subcellular location is the host cytoplasm. The enzyme catalyses GTP + S-adenosyl-L-methionine = N(7)-methyl-GTP + S-adenosyl-L-homocysteine. The catalysed reaction is N(7)-methyl-GTP + L-histidyl-[protein] = N(tele)-(N(7)-methylguanosine 5'-phospho)-L-histidyl-[protein] + diphosphate. It carries out the reaction N(tele)-(N(7)-methylguanosine 5'-phospho)-L-histidyl-[protein] + a 5'-end diphospho-(purine-ribonucleoside) in mRNA + H(+) = a 5'-end (N(7)-methyl 5'-triphosphoguanosine)-(purine-ribonucleoside) in mRNA + L-histidyl-[protein]. It catalyses the reaction a 5'-end triphospho-ribonucleoside in mRNA + H2O = a 5'-end diphospho-ribonucleoside in mRNA + phosphate + H(+). The enzyme catalyses a ribonucleoside 5'-triphosphate + H2O = a ribonucleoside 5'-diphosphate + phosphate + H(+). The catalysed reaction is ATP + H2O = ADP + phosphate + H(+). It carries out the reaction RNA(n) + a ribonucleoside 5'-triphosphate = RNA(n+1) + diphosphate. It catalyses the reaction 4-O-(ADP-D-ribosyl)-L-aspartyl-[protein] + H2O = L-aspartyl-[protein] + ADP-D-ribose + H(+). The enzyme catalyses 5-O-(ADP-D-ribosyl)-L-glutamyl-[protein] + H2O = L-glutamyl-[protein] + ADP-D-ribose + H(+). The catalysed reaction is RNA(n) + ATP = RNA(n)-3'-adenine ribonucleotide + diphosphate. It carries out the reaction ADP-alpha-D-ribose 1''-phosphate + H2O = ADP-D-ribose + phosphate. Functionally, inactive precursor of the viral replicase, which is activated by cleavages carried out by the viral protease nsP2. Its function is as follows. The early replication complex formed by the polyprotein P123 and nsP4 synthesizes minus-strand RNAs. As soon P123 is cleaved into mature proteins, the plus-strand RNAs synthesis begins. In terms of biological role, the early replication complex formed by the polyprotein P123' and nsP4 synthesizes minus-strand RNAs. Polyprotein P123' is a short-lived polyprotein that accumulates during early stage of infection. As soon P123' is cleaved into mature proteins, the plus-strand RNAs synthesis begins. Cytoplasmic capping enzyme that catalyzes two virus-specific reactions: methyltransferase and nsP1 guanylyltransferase. mRNA-capping is necessary since all viral RNAs are synthesized in the cytoplasm, and host capping enzymes are restricted to the nucleus. The enzymatic reaction involves a covalent link between 7-methyl-GMP and nsP1, whereas eukaryotic capping enzymes form a covalent complex only with GMP. nsP1 capping consists in the following reactions: GTP is first methylated into 7-methyl-GMP and then is covalently linked to nsP1 to form the m7GMp-nsP1 complex from which 7-methyl-GMP complex is transferred to the mRNA to create the cap structure. NsP1 is also needed for the initiation of the minus-strand RNAs synthesis. Probably serves as a membrane anchor for the replication complex composed of nsP1-nsP4. Palmitoylated nsP1 is remodeling host cell cytoskeleton, and induces filopodium-like structure formation at the surface of the host cell. Functionally, multifunctional protein whose N-terminus is part of the RNA polymerase complex and displays NTPase, RNA triphosphatase and helicase activities. NTPase and RNA triphosphatase are involved in viral RNA capping and helicase keeps a check on the dsRNA replication intermediates. The C-terminus harbors a protease that specifically cleaves the polyproteins and releases the mature proteins. Required for the shutoff of minus-strand RNAs synthesis. Specifically inhibits the host IFN response by promoting the nuclear export of host STAT1. Also inhibits host transcription by inducing the rapid proteasome-dependent degradation of POLR2A, a catalytic subunit of the RNAPII complex. The resulting inhibition of cellular protein synthesis serves to ensure maximal viral gene expression and to evade host immune response. Its function is as follows. Seems to be essential for minus-strand RNAs and subgenomic 26S mRNAs synthesis. Displays mono-ADP-ribosylhydrolase activity. ADP-ribosylation is a post-translational modification that controls various processes of the host cell and the virus probably needs to revert it for optimal viral replication. Binds proteins of FXR family and sequesters them into the viral RNA replication complexes thereby inhibiting the formation of host stress granules on viral mRNAs. The nsp3'-FXR complexes bind viral RNAs and probably orchestrate the assembly of viral replication complexes, thanks to the ability of FXR family members to self-assemble and bind DNA. In terms of biological role, seems to be essential for minus-strand RNAs and subgenomic 26S mRNAs synthesis. Displays mono-ADP-ribosylhydrolase activity. ADP-ribosylation is a post-translational modification that controls various processes of the host cell and the virus probably needs to revert it for optimal viral replication. Binds proteins of G3BP family and sequesters them into the viral RNA replication complexes thereby inhibiting the formation of host stress granules on viral mRNAs. The nsp3-G3BP complexes bind viral RNAs and probably orchestrate the assembly of viral replication complexes, thanks to the ability of G3BP family members to self-assemble and bind DNA. RNA dependent RNA polymerase. Replicates genomic and antigenomic RNA by recognizing replications specific signals. The early replication complex formed by the polyprotein P123 and nsP4 synthesizes minus-strand RNAs. The late replication complex composed of fully processed nsP1-nsP4 is responsible for the production of genomic and subgenomic plus-strand RNAs. The chain is Polyprotein P1234 from Aedes (Common banded mosquito).